We begin with the raw amino-acid sequence, 262 residues long: Methylthioribulose-1-phosphate dehydratase (262 aa).

Substrate is bound at residue Cys115. Residues His133 and His135 each contribute to the Zn(2+) site. The active-site Proton donor/acceptor is the Glu158. His223 provides a ligand contact to Zn(2+).

It belongs to the aldolase class II family. MtnB subfamily. The cofactor is Zn(2+).

Its subcellular location is the cytoplasm. It carries out the reaction 5-(methylsulfanyl)-D-ribulose 1-phosphate = 5-methylsulfanyl-2,3-dioxopentyl phosphate + H2O. It functions in the pathway amino-acid biosynthesis; L-methionine biosynthesis via salvage pathway; L-methionine from S-methyl-5-thio-alpha-D-ribose 1-phosphate: step 2/6. In terms of biological role, catalyzes the dehydration of methylthioribulose-1-phosphate (MTRu-1-P) into 2,3-diketo-5-methylthiopentyl-1-phosphate (DK-MTP-1-P). In Meyerozyma guilliermondii (strain ATCC 6260 / CBS 566 / DSM 6381 / JCM 1539 / NBRC 10279 / NRRL Y-324) (Yeast), this protein is Methylthioribulose-1-phosphate dehydratase.